The following is a 228-amino-acid chain: MPKLVFSRHGLSEWNALNQFTGWADVDLAPEGVEEAKEGGRKIKEAGIEFDVAYTSVLTRAIKTCNYLLEYSDQLWVPQIKSWRLNERHYGKLQGLNKKETAEKYGDEQVHIWRRSYDTLPPLMEATDEGSAANDRRYAMLDQRDIPGGENLKVTLERALPFWQDEIAPALKDNKTVLVAAHGNSLRALAKHIEGISDEDIMDLEIPTGKPLVYELNDDLTVKEKYYL.

Residues 8-15 (RHGLSEWN), 21-22 (TG), Arg60, 87-90 (ERHY), Lys98, 114-115 (RR), and 183-184 (GN) contribute to the substrate site. Residue His9 is the Tele-phosphohistidine intermediate of the active site. The Proton donor/acceptor role is filled by Glu87.

This sequence belongs to the phosphoglycerate mutase family. BPG-dependent PGAM subfamily.

It catalyses the reaction (2R)-2-phosphoglycerate = (2R)-3-phosphoglycerate. It functions in the pathway carbohydrate degradation; glycolysis; pyruvate from D-glyceraldehyde 3-phosphate: step 3/5. Catalyzes the interconversion of 2-phosphoglycerate and 3-phosphoglycerate. This is 2,3-bisphosphoglycerate-dependent phosphoglycerate mutase from Enterococcus faecalis (strain ATCC 700802 / V583).